Reading from the N-terminus, the 898-residue chain is Chaperone protein ClpB 1 (898 aa).

The region spanning 6–148 is the Clp R domain; it reads PTKFTEQAWD…ELAIKAIRGS (143 aa). 2 repeat regions span residues 9–74 and 85–148; these read FTEQ…TNRQ and LGRS…IRGS. The tract at residues 161–344 is NBD1; sequence EALDKYGRDL…RRFQQVYVKQ (184 aa). ATP is bound at residue 208–215; sequence GEPGVGKT. Residues 345–560 are linker; it reads PSVDDTISIL…IAEIVAGWTG (216 aa). Residues 395-536 are a coiled coil; that stretch reads IDLVDEAAAR…KESKLLEIQG (142 aa). Residues 570 to 781 are NBD2; it reads ERQKLLQLEG…RIDDLIIFHT (212 aa). 620-627 is an ATP binding site; that stretch reads GPTGVGKT. Residues 782-898 form a C-terminal region; sequence LKRDELRRIV…TAVEVEVLSS (117 aa).

This sequence belongs to the ClpA/ClpB family. In terms of assembly, homohexamer. The oligomerization is ATP-dependent.

Its subcellular location is the cytoplasm. In terms of biological role, part of a stress-induced multi-chaperone system, it is involved in the recovery of the cell from heat-induced damage, in cooperation with DnaK, DnaJ and GrpE. Acts before DnaK, in the processing of protein aggregates. Protein binding stimulates the ATPase activity; ATP hydrolysis unfolds the denatured protein aggregates, which probably helps expose new hydrophobic binding sites on the surface of ClpB-bound aggregates, contributing to the solubilization and refolding of denatured protein aggregates by DnaK. This chain is Chaperone protein ClpB 1 (clpB1), found in Synechocystis sp. (strain ATCC 27184 / PCC 6803 / Kazusa).